We begin with the raw amino-acid sequence, 183 residues long: ATP synthase subunit delta (183 aa).

The protein belongs to the ATPase delta chain family. In terms of assembly, F-type ATPases have 2 components, F(1) - the catalytic core - and F(0) - the membrane proton channel. F(1) has five subunits: alpha(3), beta(3), gamma(1), delta(1), epsilon(1). CF(0) has four main subunits: a(1), b(1), b'(1) and c(10-14). The alpha and beta chains form an alternating ring which encloses part of the gamma chain. F(1) is attached to F(0) by a central stalk formed by the gamma and epsilon chains, while a peripheral stalk is formed by the delta, b and b' chains.

Its subcellular location is the cellular thylakoid membrane. Functionally, f(1)F(0) ATP synthase produces ATP from ADP in the presence of a proton or sodium gradient. F-type ATPases consist of two structural domains, F(1) containing the extramembraneous catalytic core and F(0) containing the membrane proton channel, linked together by a central stalk and a peripheral stalk. During catalysis, ATP synthesis in the catalytic domain of F(1) is coupled via a rotary mechanism of the central stalk subunits to proton translocation. This protein is part of the stalk that links CF(0) to CF(1). It either transmits conformational changes from CF(0) to CF(1) or is implicated in proton conduction. This chain is ATP synthase subunit delta, found in Trichormus variabilis (strain ATCC 29413 / PCC 7937) (Anabaena variabilis).